Reading from the N-terminus, the 217-residue chain is 3,4-dihydroxy-2-butanone 4-phosphate synthase (217 aa).

Residues 37–38 (RE), Asp-42, 150–154 (RGGHT), and Glu-174 contribute to the D-ribulose 5-phosphate site. Glu-38 serves as a coordination point for Mg(2+). Residue His-153 coordinates Mg(2+).

The protein belongs to the DHBP synthase family. As to quaternary structure, homodimer. The cofactor is Mg(2+). Mn(2+) is required as a cofactor.

The enzyme catalyses D-ribulose 5-phosphate = (2S)-2-hydroxy-3-oxobutyl phosphate + formate + H(+). The protein operates within cofactor biosynthesis; riboflavin biosynthesis; 2-hydroxy-3-oxobutyl phosphate from D-ribulose 5-phosphate: step 1/1. Its function is as follows. Catalyzes the conversion of D-ribulose 5-phosphate to formate and 3,4-dihydroxy-2-butanone 4-phosphate. In Pectobacterium carotovorum subsp. carotovorum (strain PC1), this protein is 3,4-dihydroxy-2-butanone 4-phosphate synthase.